The primary structure comprises 186 residues: uncharacterized protein (186 aa).

A run of 3 helical transmembrane segments spans residues 43-63 (GAWVIHIVLIAALRLIFHAIP), 69-89 (LAWTLTNLTYMAGSFIMFHWV), and 143-163 (WMFLVNIWALFMVLIPKLPAV).

It localises to the endoplasmic reticulum membrane. This is an uncharacterized protein from Schizosaccharomyces pombe (strain 972 / ATCC 24843) (Fission yeast).